The following is a 387-amino-acid chain: SLC2A4 regulator (387 aa).

Disordered stretches follow at residues 1–97 and 139–179; these read MERP…RATP and EALV…PPEA. Residues 27 to 36 show a composition bias toward low complexity; that stretch reads GPGPRAAPVT. The C2H2-type zinc-finger motif lies at 200 to 225; sequence FQCLWKSCGKVLSTASAMQRHIRLVH. The Nuclear export signal motif lies at 253 to 263; that stretch reads LTDGLSSLTPV. Phosphoserine is present on residues serine 264 and serine 268. Residues 283–305 are disordered; it reads EPPALPSPLRPPAPPLPPPPVLS. Residues 285-303 are compositionally biased toward pro residues; the sequence is PALPSPLRPPAPPLPPPPV. Residues 351 to 354 carry the Nuclear localization signal motif; the sequence is RKPR.

Interacts with MEF2A. According to PubMed:14630949, expressed in heart, skeletal muscle, liver, kidney and pancreas; undetectable in lung, placenta or brain. According to PubMed:14625278, ubiquitously expressed, with lowest expression in brain and ileum.

Its subcellular location is the cytoplasm. It localises to the nucleus. In terms of biological role, transcription factor involved in SLC2A4 and HD gene transactivation. Binds to the consensus sequence 5'-GCCGGCG-3'. This is SLC2A4 regulator (SLC2A4RG) from Homo sapiens (Human).